The primary structure comprises 1354 residues: High molecular weight rhoptry protein 2 (1354 aa).

Residues 1 to 20 form the signal peptide; it reads MVKLSGIILLSLVWLKLNNS. 2 disulfides stabilise this stretch: C50–C75 and C220–C227. A helical transmembrane segment spans residues 716–736; it reads LIFAAYMLTLVFFIESQIDIS. Intrachain disulfides connect C768/C828, C848/C889, and C924/C1011.

As to quaternary structure, component of the RhopH complex. RhopH complex is composed of CLAG3.1/CLAG3.2, RhopH2 and RhopH3 with a 1:1:1 subunit stoichiometry. Interacts with CLAG3.1/CLAG3.2.

It is found in the host cell membrane. It localises to the parasitophorous vacuole membrane. The protein localises to the host cytoplasm. The protein resides in the cytoplasm. Its subcellular location is the cytoplasmic vesicle. It is found in the secretory vesicle. It localises to the rhoptry. Participates in the formation of new permeability pathways in Plasmodium-infected erythrocytes enabling the uptake of nutrients from the blood plasma. Required for maintaining invasion capacity of merozoites. Required for parasite growth and proliferation. The polypeptide is High molecular weight rhoptry protein 2 (Plasmodium berghei (strain Anka)).